We begin with the raw amino-acid sequence, 346 residues long: Holliday junction branch migration complex subunit RuvB (346 aa).

The interval 4–184 is large ATPase domain (RuvB-L); that stretch reads TDRLIAPTAK…FGIVQRLEFY (181 aa). ATP is bound by residues arginine 24, glycine 65, lysine 68, threonine 69, threonine 70, 131–133, arginine 174, tyrosine 184, and arginine 221; that span reads EDF. Mg(2+) is bound at residue threonine 69. Residues 185 to 255 are small ATPAse domain (RuvB-S); that stretch reads NVKDLTHIVA…LADKALNMLN (71 aa). Positions 258–346 are head domain (RuvB-H); sequence ERGFDHMDRR…QESQGGEGIA (89 aa). Residues arginine 294, arginine 313, and arginine 318 each contribute to the DNA site.

It belongs to the RuvB family. In terms of assembly, homohexamer. Forms an RuvA(8)-RuvB(12)-Holliday junction (HJ) complex. HJ DNA is sandwiched between 2 RuvA tetramers; dsDNA enters through RuvA and exits via RuvB. An RuvB hexamer assembles on each DNA strand where it exits the tetramer. Each RuvB hexamer is contacted by two RuvA subunits (via domain III) on 2 adjacent RuvB subunits; this complex drives branch migration. In the full resolvosome a probable DNA-RuvA(4)-RuvB(12)-RuvC(2) complex forms which resolves the HJ.

Its subcellular location is the cytoplasm. It carries out the reaction ATP + H2O = ADP + phosphate + H(+). Functionally, the RuvA-RuvB-RuvC complex processes Holliday junction (HJ) DNA during genetic recombination and DNA repair, while the RuvA-RuvB complex plays an important role in the rescue of blocked DNA replication forks via replication fork reversal (RFR). RuvA specifically binds to HJ cruciform DNA, conferring on it an open structure. The RuvB hexamer acts as an ATP-dependent pump, pulling dsDNA into and through the RuvAB complex. RuvB forms 2 homohexamers on either side of HJ DNA bound by 1 or 2 RuvA tetramers; 4 subunits per hexamer contact DNA at a time. Coordinated motions by a converter formed by DNA-disengaged RuvB subunits stimulates ATP hydrolysis and nucleotide exchange. Immobilization of the converter enables RuvB to convert the ATP-contained energy into a lever motion, pulling 2 nucleotides of DNA out of the RuvA tetramer per ATP hydrolyzed, thus driving DNA branch migration. The RuvB motors rotate together with the DNA substrate, which together with the progressing nucleotide cycle form the mechanistic basis for DNA recombination by continuous HJ branch migration. Branch migration allows RuvC to scan DNA until it finds its consensus sequence, where it cleaves and resolves cruciform DNA. This Cellvibrio japonicus (strain Ueda107) (Pseudomonas fluorescens subsp. cellulosa) protein is Holliday junction branch migration complex subunit RuvB.